Consider the following 942-residue polypeptide: Alanine--tRNA ligase (942 aa).

The Zn(2+) site is built by H586, H590, C695, and H699.

Belongs to the class-II aminoacyl-tRNA synthetase family. Zn(2+) is required as a cofactor.

The protein localises to the cytoplasm. It catalyses the reaction tRNA(Ala) + L-alanine + ATP = L-alanyl-tRNA(Ala) + AMP + diphosphate. Functionally, catalyzes the attachment of alanine to tRNA(Ala) in a two-step reaction: alanine is first activated by ATP to form Ala-AMP and then transferred to the acceptor end of tRNA(Ala). Also edits incorrectly charged Ser-tRNA(Ala) and Gly-tRNA(Ala) via its editing domain. The protein is Alanine--tRNA ligase of Akkermansia muciniphila (strain ATCC BAA-835 / DSM 22959 / JCM 33894 / BCRC 81048 / CCUG 64013 / CIP 107961 / Muc).